Reading from the N-terminus, the 876-residue chain is Leucine--tRNA ligase (876 aa).

Residues 1-20 (MATERYNPRDAEPRWQQKWN) are disordered. Positions 43–53 (PYPSGRIHMGH) match the 'HIGH' region motif. The 'KMSKS' region signature appears at 632–636 (KMSKS). Lys-635 contacts ATP.

Belongs to the class-I aminoacyl-tRNA synthetase family.

The protein resides in the cytoplasm. It catalyses the reaction tRNA(Leu) + L-leucine + ATP = L-leucyl-tRNA(Leu) + AMP + diphosphate. The polypeptide is Leucine--tRNA ligase (Rhizobium leguminosarum bv. trifolii (strain WSM2304)).